The sequence spans 411 residues: Arginine deiminase (411 aa).

Catalysis depends on C401, which acts as the Amidino-cysteine intermediate.

The protein belongs to the arginine deiminase family.

The protein resides in the cytoplasm. It catalyses the reaction L-arginine + H2O = L-citrulline + NH4(+). Its pathway is amino-acid degradation; L-arginine degradation via ADI pathway; carbamoyl phosphate from L-arginine: step 1/2. This chain is Arginine deiminase, found in Streptococcus pyogenes serotype M49 (strain NZ131).